Here is a 154-residue protein sequence, read N- to C-terminus: Protein X (154 aa).

A mitochondrial targeting sequence region spans residues 68–117 (PCALRFTSARCMETTVNAHQILPKVLHKRTLGLPAMSTTDLEAYFKDCVF).

Belongs to the orthohepadnavirus protein X family. As to quaternary structure, may form homodimer. May interact with host CEBPA, CFLAR, CREB1, DDB1, E4F1, HBXIP, HSPD1/HSP60, NFKBIA, POLR2E and SMAD4. Interacts with host SMC5-SMC6 complex and induces its degradation. Interacts with host TRPC4AP; leading to prevent ubiquitination of TRPC4AP. Interacts with host PLSCR1; this interaction promotes ubiquitination and degradation of HBx and impairs HBx-mediated cell proliferation. In terms of processing, a fraction may be phosphorylated in insect cells and HepG2 cells, a human hepatoblastoma cell line. Phosphorylated in vitro by host protein kinase C or mitogen-activated protein kinase. N-acetylated in insect cells.

It is found in the host cytoplasm. It localises to the host nucleus. The protein resides in the host mitochondrion. Functionally, multifunctional protein that plays a role in silencing host antiviral defenses and promoting viral transcription. Does not seem to be essential for HBV infection. May be directly involved in development of cirrhosis and liver cancer (hepatocellular carcinoma). Most of cytosolic activities involve modulation of cytosolic calcium. The effect on apoptosis is controversial depending on the cell types in which the studies have been conducted. May induce apoptosis by localizing in mitochondria and causing loss of mitochondrial membrane potential. May also modulate apoptosis by binding host CFLAR, a key regulator of the death-inducing signaling complex (DISC). Promotes viral transcription by using the host E3 ubiquitin ligase DDB1 to target the SMC5-SMC6 complex to proteasomal degradation. This host complex would otherwise bind to viral episomal DNA, and prevents its transcription. Moderately stimulates transcription of many different viral and cellular transcription elements. Promoters and enhancers stimulated by HBx contain DNA binding sites for NF-kappa-B, AP-1, AP-2, c-EBP, ATF/CREB, or the calcium-activated factor NF-AT. The chain is Protein X from Hepatitis B virus genotype A2 subtype adw2 (strain Rutter 1979) (HBV-A).